The following is a 534-amino-acid chain: Sodium-dependent lysophosphatidylcholine symporter 1 (534 aa).

The Cytoplasmic portion of the chain corresponds to M1–Q39. The chain crosses the membrane as a helical span at residues L40 to Y69. Over L70–P80 the chain is Extracellular. A helical membrane pass occupies residues A81–F101. Residues C102 to R113 are Cytoplasmic-facing. The chain crosses the membrane as a helical span at residues L114–W133. Topologically, residues F134–F148 are extracellular. Residues L149–T173 form a helical membrane-spanning segment. Residues M174 to Q180 lie on the Cytoplasmic side of the membrane. A helical membrane pass occupies residues S181 to A212. Topologically, residues K213–R232 are extracellular. A disulfide bond links C216 and C464. N-linked (GlcNAc...) asparagine glycosylation is found at N221 and N231. A helical transmembrane segment spans residues T233 to L266. The Cytoplasmic portion of the chain corresponds to G267–P297. A helical transmembrane segment spans residues Y298 to T324. Topologically, residues Y325–N335 are extracellular. A helical membrane pass occupies residues L336 to F354. The Cytoplasmic portion of the chain corresponds to L355 to F358. The helical transmembrane segment at G359–L380 threads the bilayer. Over M381–R383 the chain is Extracellular. The helical transmembrane segment at N384 to K420 threads the bilayer. Residues H421–I430 lie on the Cytoplasmic side of the membrane. Residues F431–A457 form a helical membrane-spanning segment. Topologically, residues N458–Q469 are extracellular. The helical transmembrane segment at V470–F493 threads the bilayer. The Cytoplasmic portion of the chain corresponds to K494–L534.

This sequence belongs to the major facilitator superfamily. Post-translationally, N-glycosylated. In terms of tissue distribution, widely expressed. Exhibits an oscillatory pattern of expression in brown adipose tissue and liver consistent with a circadian rhythm. Enriched in brain micro-vessels, where it is specifically present in endothelium constituting the blood-brain barrier (at protein level).

The protein resides in the cell membrane. It localises to the endoplasmic reticulum membrane. It catalyses the reaction a 1-acyl-sn-glycero-3-phosphocholine(in) + Na(+)(in) = a 1-acyl-sn-glycero-3-phosphocholine(out) + Na(+)(out). The enzyme catalyses 1-(4Z,7Z,10Z,13Z,16Z,19Z-docosahexaenoyl)-sn-glycero-3-phosphocholine(in) + Na(+)(in) = 1-(4Z,7Z,10Z,13Z,16Z,19Z-docosahexaenoyl)-sn-glycero-3-phosphocholine(out) + Na(+)(out). The catalysed reaction is 1-(9Z-octadecenoyl)-sn-glycero-3-phosphocholine(in) + Na(+)(in) = 1-(9Z-octadecenoyl)-sn-glycero-3-phosphocholine(out) + Na(+)(out). It carries out the reaction 1-hexadecanoyl-sn-glycero-3-phosphocholine(in) + Na(+)(in) = 1-hexadecanoyl-sn-glycero-3-phosphocholine(out) + Na(+)(out). It catalyses the reaction a 1-acyl-sn-glycero-3-phosphoethanolamine(in) + Na(+)(in) = a 1-acyl-sn-glycero-3-phosphoethanolamine(out) + Na(+)(out). In terms of biological role, sodium-dependent lysophosphatidylcholine (LPC) symporter, which plays an essential role for blood-brain barrier formation and function. Specifically expressed in endothelium of the blood-brain barrier of micro-vessels and transports LPC into the brain. Transport of LPC is essential because it constitutes the major mechanism by which docosahexaenoic acid (DHA), an omega-3 fatty acid that is essential for normal brain growth and cognitive function, enters the brain. Transports LPC carrying long-chain fatty acids such LPC oleate and LPC palmitate with a minimum acyl chain length of 14 carbons. Does not transport docosahexaenoic acid in unesterified fatty acid. Not required for central nervous system vascular morphogenesis. The chain is Sodium-dependent lysophosphatidylcholine symporter 1 from Mus musculus (Mouse).